The sequence spans 424 residues: Splicing factor 3B subunit 4 (424 aa).

N-acetylalanine is present on alanine 2. 2 RRM domains span residues alanine 13–alanine 91 and alanine 100–lysine 179. A Phosphotyrosine modification is found at tyrosine 56. Residues proline 207 to glutamine 424 form a disordered region. Residues asparagine 222–glycine 231 show a composition bias toward low complexity. Residues leucine 232–proline 268 are compositionally biased toward pro residues. Composition is skewed to low complexity over residues glycine 269–threonine 280 and histidine 303–histidine 323. Composition is skewed to pro residues over residues glutamine 332–proline 381 and proline 388–glutamine 424.

This sequence belongs to the SF3B4 family. As to quaternary structure, component of the 17S U2 SnRNP complex, a ribonucleoprotein complex that contains small nuclear RNA (snRNA) U2 and a number of specific proteins. Part of the SF3B subcomplex of the 17S U2 SnRNP complex. SF3B associates with the splicing subcomplex SF3A and a 12S RNA unit to form the U2 small nuclear ribonucleoproteins complex (U2 snRNP). SF3B4 has been found in complex spliceosome 'B' and 'C' as well. Component of the minor (U12-type spliceosome) spliceosome. Found in a complex with PRMT9, SF3B2 and SF3B4.

Its subcellular location is the nucleus. Its function is as follows. Component of the 17S U2 SnRNP complex of the spliceosome, a large ribonucleoprotein complex that removes introns from transcribed pre-mRNAs. The 17S U2 SnRNP complex (1) directly participates in early spliceosome assembly and (2) mediates recognition of the intron branch site during pre-mRNA splicing by promoting the selection of the pre-mRNA branch-site adenosine, the nucleophile for the first step of splicing. Within the 17S U2 SnRNP complex, SF3B4 is part of the SF3B subcomplex, which is required for 'A' complex assembly formed by the stable binding of U2 snRNP to the branchpoint sequence in pre-mRNA. Sequence independent binding of SF3A and SF3B subcomplexes upstream of the branch site is essential, it may anchor U2 snRNP to the pre-mRNA. May also be involved in the assembly of the 'E' complex. Also acts as a component of the minor spliceosome, which is involved in the splicing of U12-type introns in pre-mRNAs. In Homo sapiens (Human), this protein is Splicing factor 3B subunit 4 (SF3B4).